Consider the following 330-residue polypeptide: MRFKGLDLNLLVALDALITERNLSSAARKINLSQPAMSAAVARLRKHFRDELFGMRGRELVLSSRAEGLAAPVREALMHIELSIMARHPFDPARLNRRFRIVLSDFVTVVLFRNVVARVTREAPAVSFELAAPTDEHELLLRRGEVDFVIRPDFFMSSTHPRAALFEERLVCVGCCTNRELQPRLTFDRYMSMGHVAVKHGGAPRTPVEHSFLTDLGPTRRIDILVQSFSMIPPLIVGTNRIGTMPLGLVRHFQRTMPLRIVELPHPFPAFTEAVQWPSLHNSDPGSLWMRDILFQEATRMATTQELRVTSSPEDAEPPGHFVRSVSPLP.

The 58-residue stretch at 6–63 (LDLNLLVALDALITERNLSSAARKINLSQPAMSAAVARLRKHFRDELFGMRGRELVLS) folds into the HTH lysR-type domain. Residues 23–42 (LSSAARKINLSQPAMSAAVA) constitute a DNA-binding region (H-T-H motif). The tract at residues 308–330 (RVTSSPEDAEPPGHFVRSVSPLP) is disordered.

This sequence belongs to the LysR transcriptional regulatory family.

NodD regulates the expression of the nodABCFE genes which encode other nodulation proteins. NodD is also a negative regulator of its own expression. Binds flavonoids as inducers. In Bradyrhizobium diazoefficiens (strain JCM 10833 / BCRC 13528 / IAM 13628 / NBRC 14792 / USDA 110), this protein is Nodulation protein D 2 (nodD2).